A 209-amino-acid polypeptide reads, in one-letter code: Inorganic pyrophosphatase (209 aa).

Substrate contacts are provided by K38, R52, and Y64. Residues D92, D97, and D130 each coordinate Mg(2+). Y167 is a substrate binding site.

This sequence belongs to the PPase family. In terms of assembly, homohexamer. It depends on Mg(2+) as a cofactor.

The protein resides in the cytoplasm. It carries out the reaction diphosphate + H2O = 2 phosphate + H(+). Its function is as follows. Catalyzes the hydrolysis of inorganic pyrophosphate (PPi) forming two phosphate ions. The polypeptide is Inorganic pyrophosphatase (Chlamydia muridarum (strain MoPn / Nigg)).